Consider the following 424-residue polypeptide: Phosphomethylpyrimidine synthase (424 aa).

Residues N66, M95, Y124, H163, 185–187 (SRG), 226–229 (DGMR), and E265 contribute to the substrate site. Residue H269 coordinates Zn(2+). Substrate is bound at residue F292. Zn(2+) is bound at residue H333. The [4Fe-4S] cluster site is built by C408, C411, and C415.

The protein belongs to the ThiC family. [4Fe-4S] cluster serves as cofactor.

The enzyme catalyses 5-amino-1-(5-phospho-beta-D-ribosyl)imidazole + S-adenosyl-L-methionine = 4-amino-2-methyl-5-(phosphooxymethyl)pyrimidine + CO + 5'-deoxyadenosine + formate + L-methionine + 3 H(+). The protein operates within cofactor biosynthesis; thiamine diphosphate biosynthesis. Functionally, catalyzes the synthesis of the hydroxymethylpyrimidine phosphate (HMP-P) moiety of thiamine from aminoimidazole ribotide (AIR) in a radical S-adenosyl-L-methionine (SAM)-dependent reaction. In Thermotoga sp. (strain RQ2), this protein is Phosphomethylpyrimidine synthase.